Reading from the N-terminus, the 511-residue chain is ATP synthase subunit alpha, mitochondrial (511 aa).

Glycine 171–threonine 178 is a binding site for ATP.

This sequence belongs to the ATPase alpha/beta chains family. As to quaternary structure, F-type ATPases have 2 components, CF(1) - the catalytic core - and CF(0) - the membrane proton channel. CF(1) has five subunits: alpha(3), beta(3), gamma(1), delta(1), epsilon(1). CF(0) has three main subunits: a, b and c.

The protein localises to the mitochondrion. It is found in the mitochondrion inner membrane. Its function is as follows. Mitochondrial membrane ATP synthase (F(1)F(0) ATP synthase or Complex V) produces ATP from ADP in the presence of a proton gradient across the membrane which is generated by electron transport complexes of the respiratory chain. F-type ATPases consist of two structural domains, F(1) - containing the extramembraneous catalytic core, and F(0) - containing the membrane proton channel, linked together by a central stalk and a peripheral stalk. During catalysis, ATP synthesis in the catalytic domain of F(1) is coupled via a rotary mechanism of the central stalk subunits to proton translocation. Subunits alpha and beta form the catalytic core in F(1). Rotation of the central stalk against the surrounding alpha(3)beta(3) subunits leads to hydrolysis of ATP in three separate catalytic sites on the beta subunits. Subunit alpha does not bear the catalytic high-affinity ATP-binding sites. The protein is ATP synthase subunit alpha, mitochondrial (ATPA) of Oenothera biennis (German evening primrose).